Here is a 215-residue protein sequence, read N- to C-terminus: Soluble inorganic pyrophosphatase (215 aa).

Low complexity predominate over residues 1 to 21; the sequence is MSQEDSTSAAAAQQPTSRPAP. The segment at 1–24 is disordered; that stretch reads MSQEDSTSAAAAQQPTSRPAPKLN. 3 residues coordinate Mg(2+): aspartate 103, aspartate 108, and aspartate 140.

Belongs to the PPase family. Mg(2+) serves as cofactor. Expressed in metabolically active tissue such as root, shoot, embryo and aleurone.

The protein localises to the cytoplasm. The enzyme catalyses diphosphate + H2O = 2 phosphate + H(+). May play a role in germination. The protein is Soluble inorganic pyrophosphatase (IPP) of Hordeum vulgare subsp. vulgare (Domesticated barley).